The primary structure comprises 141 residues: Large ribosomal subunit protein uL11 (141 aa).

Belongs to the universal ribosomal protein uL11 family. Part of the ribosomal stalk of the 50S ribosomal subunit. Interacts with L10 and the large rRNA to form the base of the stalk. L10 forms an elongated spine to which L12 dimers bind in a sequential fashion forming a multimeric L10(L12)X complex. One or more lysine residues are methylated.

Forms part of the ribosomal stalk which helps the ribosome interact with GTP-bound translation factors. The sequence is that of Large ribosomal subunit protein uL11 from Chlamydia trachomatis serovar L2 (strain ATCC VR-902B / DSM 19102 / 434/Bu).